The chain runs to 310 residues: Methionyl-tRNA formyltransferase (310 aa).

Residue 112 to 115 (SLLP) participates in (6S)-5,6,7,8-tetrahydrofolate binding.

Belongs to the Fmt family.

The enzyme catalyses L-methionyl-tRNA(fMet) + (6R)-10-formyltetrahydrofolate = N-formyl-L-methionyl-tRNA(fMet) + (6S)-5,6,7,8-tetrahydrofolate + H(+). Attaches a formyl group to the free amino group of methionyl-tRNA(fMet). The formyl group appears to play a dual role in the initiator identity of N-formylmethionyl-tRNA by promoting its recognition by IF2 and preventing the misappropriation of this tRNA by the elongation apparatus. In Pelagibacter ubique (strain HTCC1062), this protein is Methionyl-tRNA formyltransferase.